The chain runs to 512 residues: Sucrose transport protein SUC2 (512 aa).

The Cytoplasmic segment spans residues 1 to 31 (MVSHPMEKAANGASALETQTGELDQPERLRK). A helical transmembrane segment spans residues 32–52 (IISVSSIAAGVQFGWALQLSL). Residues 53 to 65 (LTPYVQLLGIPHK) are Extracellular-facing. A helical transmembrane segment spans residues 66 to 86 (WASLIWLCGPISGMLVQPIVG). Residues 87–100 (YHSDRCTSRFGRRR) lie on the Cytoplasmic side of the membrane. Residues 101-121 (PFIVAGAGLVTVAVFLIGYAA) form a helical membrane-spanning segment. Over 122–138 (DIGHSMGDQLDKPPKTR) the chain is Extracellular. A helical transmembrane segment spans residues 139 to 159 (AIAIFALGFWILDVANNTLQG). Residues 160–177 (PCRAFLADLSAGNAKKTR) lie on the Cytoplasmic side of the membrane. A helical transmembrane segment spans residues 178–198 (TANAFFSFFMAVGNVLGYAAG). The Extracellular segment spans residues 199–223 (SYRNLYKVVPFTMTESCDLYCANLK). A helical membrane pass occupies residues 224-244 (TCFFLSITLLLIVTFVSLCYV). Residues 245–278 (KEKPWTPEPTADGKASNVPFFGEIFGAFKELKRP) lie on the Cytoplasmic side of the membrane. Residues 279-299 (MWMLLIVTALNWIAWFPFLLF) traverse the membrane as a helical segment. The Extracellular portion of the chain corresponds to 300–332 (DTDWMGREVYGGNSDATATAASKKLYNDGVRAG). Residues 333–353 (ALGLMLNAIVLGFMSLGVEWI) form a helical membrane-spanning segment. Topologically, residues 354–362 (GRKLGGAKR) are cytoplasmic. Residues 363 to 383 (LWGIVNFILAICLAMTVVVTK) traverse the membrane as a helical segment. Topologically, residues 384 to 407 (QAENHRRDHGGAKTGPPGNVTAGA) are extracellular. Asparagine 402 is a glycosylation site (N-linked (GlcNAc...) asparagine). The helical transmembrane segment at 408-428 (LTLFAILGIPQAITFSIPFAL) threads the bilayer. Residues 429–440 (ASIFSTNSGAGQ) lie on the Cytoplasmic side of the membrane. A helical membrane pass occupies residues 441–461 (GLSLGVLNLAIVVPQMVISVG). Residues 462–473 (GGPFDELFGGGN) are Extracellular-facing. Residues 474–494 (IPAFVLGAIAAAVSGVLALTV) traverse the membrane as a helical segment. Over 495–512 (LPSPPPDAPAFKATMGFH) the chain is Cytoplasmic.

It belongs to the glycoside-pentoside-hexuronide (GPH) cation symporter transporter (TC 2.A.2.4) family. Homodimer. Interacts with SUC3 and SUC4. In terms of tissue distribution, expressed in leaves and, to a lower extent, in roots, flowers and stems. Highly specific to the phloem, exclusively localized in companion cells (at protein level).

It localises to the cell membrane. It carries out the reaction sucrose(out) + H(+)(out) = sucrose(in) + H(+)(in). It functions in the pathway glycan biosynthesis; sucrose metabolism. With respect to regulation, inhibited by protonophores (e.g. dinitrophenol and carbonyl cyanide m-chlorophenyl-hydrazone (CCCP)) and SH group inhibitors (e.g. N-ethylmaleimide (NEM) and p-chloromercuriphenyl sulphonic acid (PCMPS)). Functionally, responsible for the transport of sucrose into the cell, with the concomitant uptake of protons (symport system). Can also transport other glucosides such as maltose, arbutin (hydroquinone-beta-D-glucoside), salicin (2-(hydroxymethyl)phenyl-beta-D-glucoside), alpha-phenylglucoside, beta-phenylglucoside, alpha-paranitrophenylglucoside, beta-paranitrophenylglucoside, and paranitrophenyl-beta-thioglucoside. May also transport biotin. Required for apoplastic phloem sucrose loading in source tissues (e.g. leaves) in order to transport it to sink tissues (e.g. roots, flowers). This Arabidopsis thaliana (Mouse-ear cress) protein is Sucrose transport protein SUC2.